Here is a 359-residue protein sequence, read N- to C-terminus: MAAVSGLVRRPLREVSGLLKRRFHWTAPAALQVTVRDAINQGMDEELERDEKVFLLGEEVAQYDGAYKVSRGLWKKYGDKRIIDTPISEMGFAGIAVGAAMAGLRPICEFMTFNFSMQAIDQVINSAAKTYYMSGGLQPVPIVFRGPNGASAGVAAQHSQCFAAWYGHCPGLKVVSPWNSEDAKGLIKSAIRDNNPVVVLENELMYGVPFEFPPEAQSKDFLIPIGKAKIERQGTHITVVSHSRPVGHCLEAAAVLSKEGVECEVINMRTIRPMDMETIEASVMKTNHLVTVEGGWPQFGVGAEICARIMEGPAFNFLDAPAVRVTGADVPMPYAKILEDNSIPQVKDIIFAIKKTLNI.

Residues 1-30 constitute a mitochondrion transit peptide; that stretch reads MAAVSGLVRRPLREVSGLLKRRFHWTAPAA. Position 67 is a phosphotyrosine (Y67). Residue E89 coordinates thiamine diphosphate. Positions 142, 190, 191, 193, and 195 each coordinate K(+). At K354 the chain carries N6-acetyllysine.

In terms of assembly, heterotetramer of two PDHA1 and two PDHB subunits. The heterotetramer interacts with DLAT, and is part of the multimeric pyruvate dehydrogenase complex that contains multiple copies of pyruvate dehydrogenase (E1), dihydrolipoamide acetyltransferase (DLAT, E2) and lipoamide dehydrogenase (DLD, E3). These subunits are bound to an inner core composed of about 48 DLAT and 12 PDHX molecules. Interacts with DLAT. It depends on thiamine diphosphate as a cofactor.

The protein resides in the mitochondrion matrix. The catalysed reaction is N(6)-[(R)-lipoyl]-L-lysyl-[protein] + pyruvate + H(+) = N(6)-[(R)-S(8)-acetyldihydrolipoyl]-L-lysyl-[protein] + CO2. In terms of biological role, the pyruvate dehydrogenase complex catalyzes the overall conversion of pyruvate to acetyl-CoA and CO(2), and thereby links the glycolytic pathway to the tricarboxylic cycle. The protein is Pyruvate dehydrogenase E1 component subunit beta, mitochondrial (PDHB) of Homo sapiens (Human).